The following is a 153-amino-acid chain: MKTTSLKPADVDKKWVVIDAEGLVVGRLASIVAMRLRGKHKPAYTPHVDCGDHVIVINADKVKFTGRKYDQKVYYHHTGYPGGIKERSAKFILEGRFPERVVEKAVERMLPRGPLFRQILGHLRVYKGAAHPHEAQQPQALDVGSLNRKNVSA.

Positions 134–153 (EAQQPQALDVGSLNRKNVSA) are disordered.

The protein belongs to the universal ribosomal protein uL13 family. As to quaternary structure, part of the 50S ribosomal subunit.

In terms of biological role, this protein is one of the early assembly proteins of the 50S ribosomal subunit, although it is not seen to bind rRNA by itself. It is important during the early stages of 50S assembly. This is Large ribosomal subunit protein uL13 from Methylorubrum extorquens (strain CM4 / NCIMB 13688) (Methylobacterium extorquens).